A 60-amino-acid polypeptide reads, in one-letter code: Mastoparan-VT1 (60 aa).

Residues 1–25 (MKNTILILFTAFIALLGFFGMSAEA) form the signal peptide. The propeptide occupies 26–45 (LADLKADPLAGPNPDADPEA). AXPX repeat units follow at residues 31-34 (ADPL), 35-38 (AGPN), and 41-44 (ADPE). Leu-59 is subject to Leucine amide.

The protein belongs to the MCD family. Mastoparan subfamily. Expressed by the venom gland.

The protein localises to the secreted. Functionally, antimicrobial peptide with activities against Gram-negative and Gram-positive bacteria and the fungi C.albicans and C.parapsilosis. Exhibits little hemolytic activity against washed human erythrocytes. Also acts as a mast cell degranulating peptide. Its mast cell degranulation activity may be related to the activation of G-protein coupled receptors in mast cells as well as interaction with other proteins located in cell endosomal membranes in the mast cells. Its function is as follows. Antimicrobial peptide with activities against Gram-negative and Gram-positive bacteria and the fungi C.albicans and C.parapsilosis. Exhibits little hemolytic activity against washed human erythrocytes. Also acts as a mast cell degranulating peptide. The protein is Mastoparan-VT1 of Vespa tropica (Greater banded hornet).